The following is a 172-amino-acid chain: Adenylate kinase isoenzyme 6 (172 aa).

5 residues coordinate ATP: G13, G15, K16, T17, and T18. Residues 33–56 (NVGDLAREGQLYDGYDEEYDCPIL) are NMPbind. The segment at 108–118 (NRGYNEKKLKD) is LID. 2 residues coordinate ATP: R109 and K148.

This sequence belongs to the adenylate kinase family. AK6 subfamily. In terms of assembly, monomer and homodimer. Interacts with small ribosomal subunit protein uS11. Not a structural component of 43S pre-ribosomes, but transiently interacts with them by binding to uS11. Interacts with COIL (via C-terminus).

It localises to the cytoplasm. The protein resides in the nucleus. It is found in the nucleoplasm. The protein localises to the cajal body. It carries out the reaction AMP + ATP = 2 ADP. The catalysed reaction is ATP + H2O = ADP + phosphate + H(+). Broad-specificity nucleoside monophosphate (NMP) kinase that catalyzes the reversible transfer of the terminal phosphate group between nucleoside triphosphates and monophosphates. Also has ATPase activity. Involved in the late cytoplasmic maturation steps of the 40S ribosomal particles, specifically 18S rRNA maturation. While NMP activity is not required for ribosome maturation, ATPase activity is. Associates transiently with small ribosomal subunit protein uS11. ATP hydrolysis breaks the interaction with uS11. May temporarily remove uS11 from the ribosome to enable a conformational change of the ribosomal RNA that is needed for the final maturation step of the small ribosomal subunit. Its NMP activity may have a role in nuclear energy homeostasis. May be involved in regulation of Cajal body (CB) formation. This chain is Adenylate kinase isoenzyme 6, found in Bos taurus (Bovine).